A 117-amino-acid chain; its full sequence is DNA-directed RNA polymerase subunit omega (117 aa).

The segment covering 96–105 has biased composition (basic and acidic residues); the sequence is KEEAEEEAKQ. Residues 96–117 form a disordered region; that stretch reads KEEAEEEAKQKNSRAAKAAAAE. The span at 108–117 shows a compositional bias: low complexity; it reads SRAAKAAAAE.

This sequence belongs to the RNA polymerase subunit omega family. As to quaternary structure, the RNAP catalytic core consists of 2 alpha, 1 beta, 1 beta' and 1 omega subunit. When a sigma factor is associated with the core the holoenzyme is formed, which can initiate transcription.

The enzyme catalyses RNA(n) + a ribonucleoside 5'-triphosphate = RNA(n+1) + diphosphate. Promotes RNA polymerase assembly. Latches the N- and C-terminal regions of the beta' subunit thereby facilitating its interaction with the beta and alpha subunits. In Lactococcus lactis subsp. cremoris (strain SK11), this protein is DNA-directed RNA polymerase subunit omega.